A 1345-amino-acid polypeptide reads, in one-letter code: DNA-directed RNA polymerase subunit beta' (1345 aa).

Zn(2+)-binding residues include Cys60, Cys62, Cys75, and Cys78. Mg(2+) contacts are provided by Asp536, Asp538, and Asp540. Cys895, Cys974, Cys981, and Cys984 together coordinate Zn(2+). A disordered region spans residues Asp1325–Lys1345. A compositionally biased stretch (basic and acidic residues) spans Asp1335–Lys1345.

This sequence belongs to the RNA polymerase beta' chain family. The RNAP catalytic core consists of 2 alpha, 1 beta, 1 beta' and 1 omega subunit. When a sigma factor is associated with the core the holoenzyme is formed, which can initiate transcription. It depends on Mg(2+) as a cofactor. Zn(2+) serves as cofactor.

It catalyses the reaction RNA(n) + a ribonucleoside 5'-triphosphate = RNA(n+1) + diphosphate. DNA-dependent RNA polymerase catalyzes the transcription of DNA into RNA using the four ribonucleoside triphosphates as substrates. The protein is DNA-directed RNA polymerase subunit beta' of Bifidobacterium animalis subsp. lactis (strain AD011).